An 886-amino-acid chain; its full sequence is CRM-domain containing factor CFM3, chloroplastic/mitochondrial (886 aa).

Residues 1–70 (MAAAAMAISP…LDLRPEPSPS (70 aa)) constitute a chloroplast and mitochondrion transit peptide. 2 disordered regions span residues 56-84 (RPAS…TSRS) and 269-291 (TKGT…PPGH). CRM domains follow at residues 174-270 (LTLP…EPTK), 378-475 (PSLS…ELAE), and 590-690 (ETIT…SKLR). Positions 270 to 281 (KGTSKNTQTLGM) are enriched in polar residues. The segment at 771 to 886 (SFDNSVAVQN…QSTELTNTCS (116 aa)) is disordered. The span at 793–827 (NSDDEGDYSDEDDDEDDDNDEEDGFDYENDDEDDV) shows a compositional bias: acidic residues. Polar residues-rich tracts occupy residues 841–852 (DFGSSDSENYVS) and 869–886 (DSRN…NTCS).

In terms of assembly, interacts with RNA. Part of large ribonucleo-protein particles that contain CAF1 and/or CAF2, and RNC1.

Its subcellular location is the plastid. It localises to the chloroplast. The protein resides in the mitochondrion. Its function is as follows. Binds specific group II introns in chloroplasts and facilitates their splicing. Acts on subgroup IIB introns. The substrates of the subgroup IIB also require the CRM domain proteins CAF1 or CAF2, with a simultaneous binding of CFM3 and CAF1 or CAF2. May influence the biogenesis of the mitochondrial small ribosomal subunit. The polypeptide is CRM-domain containing factor CFM3, chloroplastic/mitochondrial (Oryza sativa subsp. japonica (Rice)).